Here is a 329-residue protein sequence, read N- to C-terminus: Phosphoenolpyruvate transferase (329 aa).

Asp-61 lines the 7,8-didemethyl-8-hydroxy-5-deazariboflavin pocket.

This sequence belongs to the CofD family. In terms of assembly, homodimer. It depends on Mg(2+) as a cofactor.

It catalyses the reaction enolpyruvoyl-2-diphospho-5'-guanosine + 7,8-didemethyl-8-hydroxy-5-deazariboflavin = dehydro coenzyme F420-0 + GMP + H(+). Its pathway is cofactor biosynthesis; coenzyme F420 biosynthesis. Functionally, catalyzes the transfer of the phosphoenolpyruvate moiety from enoylpyruvoyl-2-diphospho-5'-guanosine (EPPG) to 7,8-didemethyl-8-hydroxy-5-deazariboflavin (FO) with the formation of dehydro coenzyme F420-0 and GMP. This is Phosphoenolpyruvate transferase from Mycobacterium ulcerans (strain Agy99).